The chain runs to 252 residues: PF03932 family protein CutC (252 aa).

This sequence belongs to the CutC family.

Its subcellular location is the cytoplasm. In Serratia proteamaculans (strain 568), this protein is PF03932 family protein CutC.